A 139-amino-acid chain; its full sequence is MWLINHTYKLLSYFLRKASNRFFNSSSSSFSCSFLVFLFVVFFSDCFFSITSFLISFGILSSFLIFSLFCLGFLTVIGCLASALSLSSLSKAKIGFSSSLSSISPEGSLKSEEMLEDDEDKEFSSLLYGTSYVFAISFK.

Helical transmembrane passes span 35–55 (LVFLFVVFFSDCFFSITSFLI) and 57–77 (FGILSSFLIFSLFCLGFLTVI).

It is found in the membrane. This is an uncharacterized protein from Saccharomyces cerevisiae (strain ATCC 204508 / S288c) (Baker's yeast).